The following is a 570-amino-acid chain: Sulfite reductase [NADPH] hemoprotein beta-component (570 aa).

4 residues coordinate [4Fe-4S] cluster: Cys-434, Cys-440, Cys-479, and Cys-483. A siroheme-binding site is contributed by Cys-483.

It belongs to the nitrite and sulfite reductase 4Fe-4S domain family. As to quaternary structure, alpha(8)-beta(8). The alpha component is a flavoprotein, the beta component is a hemoprotein. Siroheme is required as a cofactor. [4Fe-4S] cluster serves as cofactor.

The catalysed reaction is hydrogen sulfide + 3 NADP(+) + 3 H2O = sulfite + 3 NADPH + 4 H(+). It participates in sulfur metabolism; hydrogen sulfide biosynthesis; hydrogen sulfide from sulfite (NADPH route): step 1/1. Its function is as follows. Component of the sulfite reductase complex that catalyzes the 6-electron reduction of sulfite to sulfide. This is one of several activities required for the biosynthesis of L-cysteine from sulfate. This is Sulfite reductase [NADPH] hemoprotein beta-component from Zymomonas mobilis subsp. mobilis (strain ATCC 31821 / ZM4 / CP4).